Consider the following 130-residue polypeptide: Small ribosomal subunit protein eS8 (130 aa).

This sequence belongs to the eukaryotic ribosomal protein eS8 family. Part of the 30S ribosomal subunit.

The sequence is that of Small ribosomal subunit protein eS8 from Thermococcus onnurineus (strain NA1).